The chain runs to 272 residues: Formamidopyrimidine-DNA glycosylase (272 aa).

Proline 2 (schiff-base intermediate with DNA) is an active-site residue. Catalysis depends on glutamate 3, which acts as the Proton donor. The Proton donor; for beta-elimination activity role is filled by lysine 58. Residues histidine 92, arginine 111, and arginine 153 each contribute to the DNA site. An FPG-type zinc finger spans residues 238 to 272; that stretch reads NVYGRGGEPCPVCAKPLTEKPLSQRTTVYCTHCQN. Residue arginine 262 is the Proton donor; for delta-elimination activity of the active site.

Belongs to the FPG family. As to quaternary structure, monomer. Zn(2+) serves as cofactor.

The enzyme catalyses Hydrolysis of DNA containing ring-opened 7-methylguanine residues, releasing 2,6-diamino-4-hydroxy-5-(N-methyl)formamidopyrimidine.. The catalysed reaction is 2'-deoxyribonucleotide-(2'-deoxyribose 5'-phosphate)-2'-deoxyribonucleotide-DNA = a 3'-end 2'-deoxyribonucleotide-(2,3-dehydro-2,3-deoxyribose 5'-phosphate)-DNA + a 5'-end 5'-phospho-2'-deoxyribonucleoside-DNA + H(+). Its function is as follows. Involved in base excision repair of DNA damaged by oxidation or by mutagenic agents. Acts as a DNA glycosylase that recognizes and removes damaged bases. Has a preference for oxidized purines, such as 7,8-dihydro-8-oxoguanine (8-oxoG). Has AP (apurinic/apyrimidinic) lyase activity and introduces nicks in the DNA strand. Cleaves the DNA backbone by beta-delta elimination to generate a single-strand break at the site of the removed base with both 3'- and 5'-phosphates. The protein is Formamidopyrimidine-DNA glycosylase of Teredinibacter turnerae (strain ATCC 39867 / T7901).